Consider the following 364-residue polypeptide: tRNA 2-selenouridine synthase (364 aa).

Positions 14–137 (LIADTPIIDV…LRQTTIQATI (124 aa)) constitute a Rhodanese domain. C97 acts as the S-selanylcysteine intermediate in catalysis.

This sequence belongs to the SelU family. In terms of assembly, monomer.

The enzyme catalyses 5-methylaminomethyl-2-thiouridine(34) in tRNA + selenophosphate + (2E)-geranyl diphosphate + H2O + H(+) = 5-methylaminomethyl-2-selenouridine(34) in tRNA + (2E)-thiogeraniol + phosphate + diphosphate. The catalysed reaction is 5-methylaminomethyl-2-thiouridine(34) in tRNA + (2E)-geranyl diphosphate = 5-methylaminomethyl-S-(2E)-geranyl-thiouridine(34) in tRNA + diphosphate. It carries out the reaction 5-methylaminomethyl-S-(2E)-geranyl-thiouridine(34) in tRNA + selenophosphate + H(+) = 5-methylaminomethyl-2-(Se-phospho)selenouridine(34) in tRNA + (2E)-thiogeraniol. It catalyses the reaction 5-methylaminomethyl-2-(Se-phospho)selenouridine(34) in tRNA + H2O = 5-methylaminomethyl-2-selenouridine(34) in tRNA + phosphate. In terms of biological role, involved in the post-transcriptional modification of the uridine at the wobble position (U34) of tRNA(Lys), tRNA(Glu) and tRNA(Gln). Catalyzes the conversion of 2-thiouridine (S2U-RNA) to 2-selenouridine (Se2U-RNA). Acts in a two-step process involving geranylation of 2-thiouridine (S2U) to S-geranyl-2-thiouridine (geS2U) and subsequent selenation of the latter derivative to 2-selenouridine (Se2U) in the tRNA chain. This is tRNA 2-selenouridine synthase from Escherichia coli O139:H28 (strain E24377A / ETEC).